The sequence spans 107 residues: Iron-binding protein IscA (107 aa).

Cysteine 35, cysteine 99, and cysteine 101 together coordinate Fe cation.

The protein belongs to the HesB/IscA family. Homodimer; may form tetramers and higher multimers. The cofactor is Fe cation.

Functionally, is able to transfer iron-sulfur clusters to apo-ferredoxin. Multiple cycles of [2Fe2S] cluster formation and transfer are observed, suggesting that IscA acts catalytically. Recruits intracellular free iron so as to provide iron for the assembly of transient iron-sulfur cluster in IscU in the presence of IscS, L-cysteine and the thioredoxin reductase system TrxA/TrxB. The chain is Iron-binding protein IscA from Klebsiella pneumoniae subsp. pneumoniae (strain ATCC 700721 / MGH 78578).